The primary structure comprises 938 residues: Isoleucine--tRNA ligase (938 aa).

Positions 58-68 match the 'HIGH' region motif; that stretch reads PYANGNIHIGH. Glutamate 563 is a binding site for L-isoleucyl-5'-AMP. The short motif at 604–608 is the 'KMSKS' region element; sequence KMSKS. Lysine 607 serves as a coordination point for ATP. 4 residues coordinate Zn(2+): cysteine 903, cysteine 906, cysteine 921, and cysteine 924.

This sequence belongs to the class-I aminoacyl-tRNA synthetase family. IleS type 1 subfamily. In terms of assembly, monomer. It depends on Zn(2+) as a cofactor.

The protein localises to the cytoplasm. The enzyme catalyses tRNA(Ile) + L-isoleucine + ATP = L-isoleucyl-tRNA(Ile) + AMP + diphosphate. Functionally, catalyzes the attachment of isoleucine to tRNA(Ile). As IleRS can inadvertently accommodate and process structurally similar amino acids such as valine, to avoid such errors it has two additional distinct tRNA(Ile)-dependent editing activities. One activity is designated as 'pretransfer' editing and involves the hydrolysis of activated Val-AMP. The other activity is designated 'posttransfer' editing and involves deacylation of mischarged Val-tRNA(Ile). This Buchnera aphidicola subsp. Schizaphis graminum (strain Sg) protein is Isoleucine--tRNA ligase.